We begin with the raw amino-acid sequence, 571 residues long: Protein PNS1 (571 aa).

Positions 1–96 are disordered; it reads MNDEEKHLAA…PDFPPDYNYK (96 aa). At 1–118 the chain is on the cytoplasmic side; the sequence is MNDEEKHLAA…AVPKPKWNDK (118 aa). Residues 15–31 are compositionally biased toward polar residues; the sequence is YQPNMHYQQQQEKQTGY. Low complexity-rich tracts occupy residues 39–52 and 71–80; these read QGGY…DYYN and GNPNDNYNNQ. A compositionally biased stretch (pro residues) spans 81–90; the sequence is QPPPYTPDFP. A helical transmembrane segment spans residues 119 to 139; it reads IGLVILALIFSGYLALSIIVI. Topologically, residues 140 to 166 are extracellular; that stretch reads RAYAQTHSFQGWGIYSGENDYSLNTHT. A helical membrane pass occupies residues 167–187; it reads LILYAFVLATAMVLSLLYFIA. At 188–189 the chain is on the cytoplasmic side; that stretch reads AR. Residues 190–210 traverse the membrane as a helical segment; that stretch reads VWTKQFIWITYILHLLFSWGT. A topological domain (extracellular) is located at residue A211. The helical transmembrane segment at 212–232 threads the bilayer; sequence IYYLVVGYYSAGIVFIVFAAL. Topologically, residues 233-263 are cytoplasmic; it reads TTWWFWCSRKRIPFATIVLQTLIDVTRANPS. Residues 264 to 284 form a helical membrane-spanning segment; it reads VLVISAVGTVVGACFGTWFSF. Residues 285 to 311 lie on the Extracellular side of the membrane; that stretch reads TIVSIYVKYDPDNRNPGCMTTGGSCSN. Residues 312–332 form a helical membrane-spanning segment; the sequence is GKLIGLILFAIFCGYYLTEVI. Residues 333–369 lie on the Cytoplasmic side of the membrane; sequence KNVIHVTISGVYGSWYYCSKSDQGMPKHAAMSSFRRA. A helical membrane pass occupies residues 370–390; that stretch reads VTYSLGSISLGSLIVSIINFI. Residues 391-406 lie on the Extracellular side of the membrane; it reads RQILSVLQQDARQSGD. A helical transmembrane segment spans residues 407 to 427; it reads TLATVLLCFVQCCFGVLDWLV. Topologically, residues 428–472 are cytoplasmic; the sequence is TYFNHYAYSYIALYGKAYVPSAKATWKLMQTRGIDAMVNDSLIGS. The helical transmembrane segment at 473–493 threads the bilayer; it reads VLSFGASFVAYAAALVAYCFL. Residues 494 to 503 lie on the Extracellular side of the membrane; sequence KYTDPSYNSG. A helical membrane pass occupies residues 504 to 524; it reads GGFYAPVVGLAFVIALQVSNI. Residues 525–571 lie on the Cytoplasmic side of the membrane; sequence TNVSLKSGCSTFFLALARDPEVLRVSYPQIYEEICRTYPPARDKLDI.

It belongs to the CTL (choline transporter-like) family.

It localises to the cell membrane. Probably involved in transport through the plasma membrane. This chain is Protein PNS1 (PNS1), found in Yarrowia lipolytica (strain CLIB 122 / E 150) (Yeast).